Consider the following 489-residue polypeptide: Protein LMBR1L (489 aa).

Topologically, residues 1–21 (MEAPDYEVLSVREQLFHERIR) are extracellular. The interval 1–59 (MEAPDYEVLSVREQLFHERIRECIISTLLFATLYILCHIFLTRFKKPAEFTTVDDEDAT) is interaction with LGB. The tract at residues 1-76 (MEAPDYEVLS…LCTFTLAIAL (76 aa)) is LCN1-binding. A helical transmembrane segment spans residues 22 to 42 (ECIISTLLFATLYILCHIFLT). Topologically, residues 43-66 (RFKKPAEFTTVDDEDATVNKIALE) are cytoplasmic. A helical transmembrane segment spans residues 67–87 (LCTFTLAIALGAVLLLPFSII). The Extracellular segment spans residues 88–114 (SNEVLLSLPRNYYIQWLNGSLIHGLWN). A helical transmembrane segment spans residues 115–135 (LVFLFSNLSLIFLMPFAYFFT). At 136–154 (ESEGFAGSRKGVLGRVYET) the chain is on the cytoplasmic side. A helical transmembrane segment spans residues 155–175 (VVMLMLLTLLVLGMVWVASAI). At 176–196 (VDKNKANRESLYDFWEYYLPY) the chain is on the extracellular side. A helical membrane pass occupies residues 197 to 217 (LYSCISFLGVLLLLVCTPLGL). The Cytoplasmic segment spans residues 218–305 (ARMFSVTGKL…NLGYPLAMLC (88 aa)). Residues 306–326 (LLVLTGLSVLIVAIHILELLI) traverse the membrane as a helical segment. The Extracellular segment spans residues 327–350 (DEAAMPRGMQGTSLGQVSFSKLGS). A helical membrane pass occupies residues 351 to 371 (FGAVIQVVLIFYLMVSSVVGF). The Cytoplasmic segment spans residues 372–388 (YSSPLFRSLRPRWHDTA). Residues 389–409 (MTQIIGNCVCLLVLSSALPVF) traverse the membrane as a helical segment. Residues 410-431 (SRTLGLTRFDLLGDFGRFNWLG) are Extracellular-facing. A helical membrane pass occupies residues 432 to 452 (NFYIVFLYNAAFAGLTTLCLV). Residues 453-489 (KTFTAAVRAELIRAFGLDRLPLPVSGFPQASRKTQHQ) are Cytoplasmic-facing.

It belongs to the LIMR family. In terms of assembly, dimer. Can also form higher oligomers. Interacts with LCN1; this interaction mediates the endocytosis of LCN1. Interacts with UBAC2, FAF2, VCP, AMFR, ZNRF3, CTNNB1, LRP6, GSK3A and GSK3B. Interacts with DVL2 and RNF43. Interaction with SCGB1A1 has been observed in PubMed:16423471, but not in PubMed:23964685. Interaction with LGB which mediates the endocytosis of LGB has been observed in PubMed:17991420, but not in PubMed:23964685. As to expression, expressed in testis, pituitary gland, adrenal gland, trachea, placenta, thymus, cerebellum, stomach, mammary gland, spinal cord. A weaker expression is detected in colon, pancreas, and prostate.

It localises to the cell membrane. The protein localises to the endoplasmic reticulum membrane. Functionally, plays an essential role in lymphocyte development by negatively regulating the canonical Wnt signaling pathway. In association with UBAC2 and E3 ubiquitin-protein ligase AMFR, promotes the ubiquitin-mediated degradation of CTNNB1 and Wnt receptors FZD6 and LRP6. LMBR1L stabilizes the beta-catenin destruction complex that is required for regulating CTNNB1 levels. Acts as a LCN1 receptor and can mediate its endocytosis. The sequence is that of Protein LMBR1L (LMBR1L) from Homo sapiens (Human).